The sequence spans 179 residues: Large ribosomal subunit protein uL5 (179 aa).

This sequence belongs to the universal ribosomal protein uL5 family. Part of the 50S ribosomal subunit; part of the 5S rRNA/L5/L18/L25 subcomplex. Contacts the 5S rRNA and the P site tRNA. Forms a bridge to the 30S subunit in the 70S ribosome.

Functionally, this is one of the proteins that bind and probably mediate the attachment of the 5S RNA into the large ribosomal subunit, where it forms part of the central protuberance. In the 70S ribosome it contacts protein S13 of the 30S subunit (bridge B1b), connecting the 2 subunits; this bridge is implicated in subunit movement. Contacts the P site tRNA; the 5S rRNA and some of its associated proteins might help stabilize positioning of ribosome-bound tRNAs. The sequence is that of Large ribosomal subunit protein uL5 from Shouchella clausii (strain KSM-K16) (Alkalihalobacillus clausii).